The chain runs to 279 residues: 4-hydroxy-3-methylbut-2-enyl diphosphate reductase (279 aa).

Cys-12 contacts [4Fe-4S] cluster. The (2E)-4-hydroxy-3-methylbut-2-enyl diphosphate site is built by His-40 and His-70. The dimethylallyl diphosphate site is built by His-40 and His-70. Positions 40 and 70 each coordinate isopentenyl diphosphate. A [4Fe-4S] cluster-binding site is contributed by Cys-92. Residue His-119 coordinates (2E)-4-hydroxy-3-methylbut-2-enyl diphosphate. A dimethylallyl diphosphate-binding site is contributed by His-119. Isopentenyl diphosphate is bound at residue His-119. Catalysis depends on Glu-121, which acts as the Proton donor. Thr-151 serves as a coordination point for (2E)-4-hydroxy-3-methylbut-2-enyl diphosphate. Residue Cys-181 coordinates [4Fe-4S] cluster. (2E)-4-hydroxy-3-methylbut-2-enyl diphosphate is bound by residues Ser-209, Ser-210, Asn-211, and Ser-251. Dimethylallyl diphosphate-binding residues include Ser-209, Ser-210, Asn-211, and Ser-251. 4 residues coordinate isopentenyl diphosphate: Ser-209, Ser-210, Asn-211, and Ser-251.

This sequence belongs to the IspH family. [4Fe-4S] cluster is required as a cofactor.

It catalyses the reaction isopentenyl diphosphate + 2 oxidized [2Fe-2S]-[ferredoxin] + H2O = (2E)-4-hydroxy-3-methylbut-2-enyl diphosphate + 2 reduced [2Fe-2S]-[ferredoxin] + 2 H(+). The enzyme catalyses dimethylallyl diphosphate + 2 oxidized [2Fe-2S]-[ferredoxin] + H2O = (2E)-4-hydroxy-3-methylbut-2-enyl diphosphate + 2 reduced [2Fe-2S]-[ferredoxin] + 2 H(+). The protein operates within isoprenoid biosynthesis; dimethylallyl diphosphate biosynthesis; dimethylallyl diphosphate from (2E)-4-hydroxy-3-methylbutenyl diphosphate: step 1/1. It functions in the pathway isoprenoid biosynthesis; isopentenyl diphosphate biosynthesis via DXP pathway; isopentenyl diphosphate from 1-deoxy-D-xylulose 5-phosphate: step 6/6. Functionally, catalyzes the conversion of 1-hydroxy-2-methyl-2-(E)-butenyl 4-diphosphate (HMBPP) into a mixture of isopentenyl diphosphate (IPP) and dimethylallyl diphosphate (DMAPP). Acts in the terminal step of the DOXP/MEP pathway for isoprenoid precursor biosynthesis. This Thermotoga neapolitana (strain ATCC 49049 / DSM 4359 / NBRC 107923 / NS-E) protein is 4-hydroxy-3-methylbut-2-enyl diphosphate reductase.